We begin with the raw amino-acid sequence, 124 residues long: Small ribosomal subunit protein uS12 (124 aa).

Asp-90 carries the post-translational modification 3-methylthioaspartic acid.

It belongs to the universal ribosomal protein uS12 family. As to quaternary structure, part of the 30S ribosomal subunit. Contacts proteins S8 and S17. May interact with IF1 in the 30S initiation complex.

Its function is as follows. With S4 and S5 plays an important role in translational accuracy. Functionally, interacts with and stabilizes bases of the 16S rRNA that are involved in tRNA selection in the A site and with the mRNA backbone. Located at the interface of the 30S and 50S subunits, it traverses the body of the 30S subunit contacting proteins on the other side and probably holding the rRNA structure together. The combined cluster of proteins S8, S12 and S17 appears to hold together the shoulder and platform of the 30S subunit. This is Small ribosomal subunit protein uS12 from Wolbachia pipientis wMel.